A 442-amino-acid chain; its full sequence is D-serine dehydratase (442 aa).

Lys118 is modified (N6-(pyridoxal phosphate)lysine).

This sequence belongs to the serine/threonine dehydratase family. DsdA subfamily. Monomer. It depends on pyridoxal 5'-phosphate as a cofactor.

The enzyme catalyses D-serine = pyruvate + NH4(+). The protein is D-serine dehydratase of Citrobacter koseri (strain ATCC BAA-895 / CDC 4225-83 / SGSC4696).